The sequence spans 240 residues: MVLLSEIPGGSNGDDPNMNPQELPEELIESIVAPIPRCYYPSLSLLSRAFRHVITSQQLFVTRSGLGFKEPVLYAFIGCTPYTTPRWFILRRSNIPLQLRRLNSLPHMFPGAAVVTIGYKIYVMGGYNYQPVSTVIIIDCRFHTWHYLQDMQRARYHATPGVIDGRIYVIGGRKKQDADWVEVFDVTTESWETVPTQCPNEASENGLFVTYAVMQGRILGVFLLTNQDKVYGSHWELYVS.

The disordered stretch occupies residues 1-20; the sequence is MVLLSEIPGGSNGDDPNMNP. One can recognise an F-box domain in the interval 17–63; it reads NMNPQELPEELIESIVAPIPRCYYPSLSLLSRAFRHVITSQQLFVTR. Kelch repeat units follow at residues 120–165 and 167–212; these read KIYV…VIDG and IYVI…VTYA.

This is Putative F-box/kelch-repeat protein At2g29860 from Arabidopsis thaliana (Mouse-ear cress).